The sequence spans 124 residues: Small ribosomal subunit protein uS13 (124 aa).

The disordered stretch occupies residues 95–124 (GLPVRGQRTKTNARTRKGPKRTIAGKKKAR).

Belongs to the universal ribosomal protein uS13 family. Part of the 30S ribosomal subunit. Forms a loose heterodimer with protein S19. Forms two bridges to the 50S subunit in the 70S ribosome.

In terms of biological role, located at the top of the head of the 30S subunit, it contacts several helices of the 16S rRNA. In the 70S ribosome it contacts the 23S rRNA (bridge B1a) and protein L5 of the 50S subunit (bridge B1b), connecting the 2 subunits; these bridges are implicated in subunit movement. Contacts the tRNAs in the A and P-sites. This chain is Small ribosomal subunit protein uS13, found in Mycolicibacterium smegmatis (strain ATCC 700084 / mc(2)155) (Mycobacterium smegmatis).